Here is a 440-residue protein sequence, read N- to C-terminus: COP9 signalosome complex subunit 4 (440 aa).

In terms of domain architecture, PCI spans Ser216–Glu386.

The protein belongs to the CSN4 family. As to quaternary structure, component of the COP9 signalosome (CSN) complex.

The protein resides in the cytoplasm. It is found in the nucleus. Component of the COP9 signalosome (CSN) complex that acts as an regulator of the ubiquitin (Ubl) conjugation pathway by mediating the deneddylation of the cullin subunit of SCF-type E3 ubiquitin-protein ligase complexes. The CSN complex is involved in the regulation of the circadian clock through its control of the stability of the SCF(FWD1) complex. This chain is COP9 signalosome complex subunit 4 (csn-4), found in Neurospora crassa (strain ATCC 24698 / 74-OR23-1A / CBS 708.71 / DSM 1257 / FGSC 987).